The chain runs to 161 residues: Regulator of ribonuclease activity A (161 aa).

Belongs to the RraA family. As to quaternary structure, homotrimer. Binds to both RNA-binding sites in the C-terminal region of Rne and to RhlB.

The protein localises to the cytoplasm. Globally modulates RNA abundance by binding to RNase E (Rne) and regulating its endonucleolytic activity. Can modulate Rne action in a substrate-dependent manner by altering the composition of the degradosome. Modulates RNA-binding and helicase activities of the degradosome. The protein is Regulator of ribonuclease activity A of Serratia proteamaculans (strain 568).